The chain runs to 425 residues: D-arabinitol transporter (425 aa).

At 1 to 7 (MSINNKQ) the chain is on the cytoplasmic side. Residues 8–28 (WLGLPLNLLWGYIAIAVFMTG) traverse the membrane as a helical segment. Residues 29 to 51 (DGFELAFLSHYIKALGFSPAEAS) are Extracellular-facing. A helical membrane pass occupies residues 52–72 (FAFTLYGLAAALSAWISGVVA). Topologically, residues 73-80 (EIITPLKT) are cytoplasmic. The helical transmembrane segment at 81–101 (MMIGFVLWCVFHVLFLVFGLG) threads the bilayer. At 102–107 (HANYAL) the chain is on the extracellular side. Residues 108–128 (ILLFYGIRGFAYPLFLYSFIV) traverse the membrane as a helical segment. The Cytoplasmic portion of the chain corresponds to 129 to 141 (AIVHNVKSDNASS). Residues 142–162 (AIGWFWAVYSIGIGVFGSYIP) form a helical membrane-spanning segment. Residues 163 to 172 (SFTIPHIGEM) are Extracellular-facing. A helical transmembrane segment spans residues 173-193 (GTLWLALAFCLTGGVIALVSL). Over 194–237 (RHIQTPQHMQNLTTREKFSELGRAATLLYTNRNILLSSMVRIIN) the chain is Cytoplasmic. A helical transmembrane segment spans residues 238–258 (TLSLFGFAVIMPMMFVDELGF). The Extracellular portion of the chain corresponds to 259–263 (STSEW). Residues 264 to 284 (LQVWAVFFFTTIFSNVLWGIL) form a helical membrane-spanning segment. Topologically, residues 285 to 295 (GEKLGWMKVVR) are cytoplasmic. Residues 296 to 316 (WFGCIGMALSSLAFYYIPQHF) form a helical membrane-spanning segment. Topologically, residues 317–323 (GHSFAMA) are extracellular. The chain crosses the membrane as a helical span at residues 324-344 (LIPAIALGIFVAAFVPLAAVF). At 345–360 (PALEPKHKGAAISVYN) the chain is on the cytoplasmic side. A helical transmembrane segment spans residues 361–381 (LSAGMSNFLAPAIAVVLLPFF). Over 382 to 383 (ST) the chain is Extracellular. Residues 384 to 404 (IGVVIAYTALYVVAFFLCAFI) traverse the membrane as a helical segment. Topologically, residues 405–425 (RVEQPGFSHKEATAREQVEFS) are cytoplasmic.

It belongs to the major facilitator superfamily. Sugar transporter (TC 2.A.1.1) family. CsbX subfamily.

It localises to the cell membrane. The protein is D-arabinitol transporter (dalT) of Klebsiella pneumoniae.